The sequence spans 99 residues: Nucleoid-associated protein SpyM3_1606 (99 aa).

This sequence belongs to the YbaB/EbfC family. As to quaternary structure, homodimer.

The protein localises to the cytoplasm. It localises to the nucleoid. In terms of biological role, binds to DNA and alters its conformation. May be involved in regulation of gene expression, nucleoid organization and DNA protection. The protein is Nucleoid-associated protein SpyM3_1606 of Streptococcus pyogenes serotype M3 (strain ATCC BAA-595 / MGAS315).